Consider the following 191-residue polypeptide: Cell division protein SepF (191 aa).

The span at 156 to 167 (EEASPSNMSNKG) shows a compositional bias: polar residues. Residues 156 to 191 (EEASPSNMSNKGNDLISKETSPAPEPAWGETVATAL) are disordered.

This sequence belongs to the SepF family. In terms of assembly, homodimer. Interacts with FtsZ.

The protein resides in the cytoplasm. Its function is as follows. Cell division protein that is part of the divisome complex and is recruited early to the Z-ring. Probably stimulates Z-ring formation, perhaps through the cross-linking of FtsZ protofilaments. Its function overlaps with FtsA. The sequence is that of Cell division protein SepF from Prochlorococcus marinus (strain NATL1A).